The following is a 504-amino-acid chain: Glutamate--tRNA ligase (504 aa).

The short motif at 25 to 35 (PSPTGNPHVGL) is the 'HIGH' region element. Zn(2+) is bound by residues Cys-122, Cys-124, Cys-149, and Glu-151. Positions 270–274 (KLSKR) match the 'KMSKS' region motif. Lys-273 is an ATP binding site.

This sequence belongs to the class-I aminoacyl-tRNA synthetase family. Glutamate--tRNA ligase type 1 subfamily. As to quaternary structure, monomer. Zn(2+) is required as a cofactor.

It localises to the cytoplasm. The enzyme catalyses tRNA(Glu) + L-glutamate + ATP = L-glutamyl-tRNA(Glu) + AMP + diphosphate. In terms of biological role, catalyzes the attachment of glutamate to tRNA(Glu) in a two-step reaction: glutamate is first activated by ATP to form Glu-AMP and then transferred to the acceptor end of tRNA(Glu). The sequence is that of Glutamate--tRNA ligase from Streptomyces avermitilis (strain ATCC 31267 / DSM 46492 / JCM 5070 / NBRC 14893 / NCIMB 12804 / NRRL 8165 / MA-4680).